The primary structure comprises 374 residues: 4-hydroxy-3-methylbut-2-en-1-yl diphosphate synthase (flavodoxin) (374 aa).

Residues Cys-272, Cys-275, Cys-307, and Glu-314 each coordinate [4Fe-4S] cluster.

The protein belongs to the IspG family. [4Fe-4S] cluster serves as cofactor.

It carries out the reaction (2E)-4-hydroxy-3-methylbut-2-enyl diphosphate + oxidized [flavodoxin] + H2O + 2 H(+) = 2-C-methyl-D-erythritol 2,4-cyclic diphosphate + reduced [flavodoxin]. It participates in isoprenoid biosynthesis; isopentenyl diphosphate biosynthesis via DXP pathway; isopentenyl diphosphate from 1-deoxy-D-xylulose 5-phosphate: step 5/6. Functionally, converts 2C-methyl-D-erythritol 2,4-cyclodiphosphate (ME-2,4cPP) into 1-hydroxy-2-methyl-2-(E)-butenyl 4-diphosphate. The chain is 4-hydroxy-3-methylbut-2-en-1-yl diphosphate synthase (flavodoxin) from Acidiphilium cryptum (strain JF-5).